The sequence spans 278 residues: Protein EXORDIUM-like 4 (278 aa).

Positions 1 to 23 (MAYNYRFAILLVLLSATVGFTAA) are cleaved as a signal peptide. Residue asparagine 35 is glycosylated (N-linked (GlcNAc...) asparagine).

Belongs to the EXORDIUM family.

The protein resides in the secreted. The protein localises to the extracellular space. It is found in the apoplast. Its function is as follows. May play a role in a brassinosteroid-dependent regulation of growth and development. In Arabidopsis thaliana (Mouse-ear cress), this protein is Protein EXORDIUM-like 4 (EXL4).